We begin with the raw amino-acid sequence, 350 residues long: Deoxyhypusine synthase-like protein (350 aa).

This sequence belongs to the deoxyhypusine synthase family.

The sequence is that of Deoxyhypusine synthase-like protein from Chlorobaculum tepidum (strain ATCC 49652 / DSM 12025 / NBRC 103806 / TLS) (Chlorobium tepidum).